The following is a 154-amino-acid chain: Myoglobin (154 aa).

The region spanning 2–148 (GLSDGEWQLV…FRNDMAAKYK (147 aa)) is the Globin domain. At Ser-4 the chain carries Phosphoserine. His-65 lines the nitrite pocket. His-65 lines the O2 pocket. Position 68 is a phosphothreonine (Thr-68). Position 94 (His-94) interacts with heme b.

It belongs to the globin family. As to quaternary structure, monomeric.

Its subcellular location is the cytoplasm. It is found in the sarcoplasm. It catalyses the reaction Fe(III)-heme b-[protein] + nitric oxide + H2O = Fe(II)-heme b-[protein] + nitrite + 2 H(+). It carries out the reaction H2O2 + AH2 = A + 2 H2O. Its function is as follows. Monomeric heme protein which primary function is to store oxygen and facilitate its diffusion within muscle tissues. Reversibly binds oxygen through a pentacoordinated heme iron and enables its timely and efficient release as needed during periods of heightened demand. Depending on the oxidative conditions of tissues and cells, and in addition to its ability to bind oxygen, it also has a nitrite reductase activity whereby it regulates the production of bioactive nitric oxide. Under stress conditions, like hypoxia and anoxia, it also protects cells against reactive oxygen species thanks to its pseudoperoxidase activity. This is Myoglobin (MB) from Ochotona curzoniae (Black-lipped pika).